Here is a 263-residue protein sequence, read N- to C-terminus: Shikimate dehydrogenase (NADP(+)) (263 aa).

Residues 16–18 (SKS) and Thr-65 contribute to the shikimate site. The active-site Proton acceptor is the Lys-69. Asn-90 and Asp-105 together coordinate shikimate. Residues 125–129 (GSGGS) and Leu-208 each bind NADP(+). Residue Tyr-210 participates in shikimate binding. NADP(+) is bound at residue Gly-230.

Belongs to the shikimate dehydrogenase family. In terms of assembly, homodimer.

The enzyme catalyses shikimate + NADP(+) = 3-dehydroshikimate + NADPH + H(+). It participates in metabolic intermediate biosynthesis; chorismate biosynthesis; chorismate from D-erythrose 4-phosphate and phosphoenolpyruvate: step 4/7. In terms of biological role, involved in the biosynthesis of the chorismate, which leads to the biosynthesis of aromatic amino acids. Catalyzes the reversible NADPH linked reduction of 3-dehydroshikimate (DHSA) to yield shikimate (SA). This Helicobacter pylori (strain G27) protein is Shikimate dehydrogenase (NADP(+)).